Reading from the N-terminus, the 530-residue chain is GMP synthase [glutamine-hydrolyzing] (530 aa).

The region spanning Thr-18 to Asn-207 is the Glutamine amidotransferase type-1 domain. The active-site Nucleophile is Cys-94. Residues His-181 and Glu-183 contribute to the active site. Positions Trp-208 to Arg-405 constitute a GMPS ATP-PPase domain. An ATP-binding site is contributed by Ser-236–Thr-242. 4 residues coordinate XMP: Arg-309, Asp-467, Lys-522, and Glu-528.

In terms of assembly, homodimer. It depends on Mg(2+) as a cofactor.

Its subcellular location is the cytoplasm. It localises to the cytosol. It catalyses the reaction XMP + L-glutamine + ATP + H2O = GMP + L-glutamate + AMP + diphosphate + 2 H(+). The protein operates within purine metabolism; GMP biosynthesis; GMP from XMP (L-Gln route): step 1/1. In terms of biological role, catalyzes the conversion of xanthine monophosphate (XMP) to GMP in the presence of glutamine and ATP through an adenyl-XMP intermediate. This is GMP synthase [glutamine-hydrolyzing] (GUA1) from Candida albicans (strain SC5314 / ATCC MYA-2876) (Yeast).